Here is an 837-residue protein sequence, read N- to C-terminus: A disintegrin and metalloproteinase with thrombospondin motifs 4 (837 aa).

Positions 1-51 are cleaved as a signal peptide; the sequence is MSQTGSHPGRGLAGRWLWGAQPCLLLPIVPLSWLVWLLLLLLASLLPSARL. A propeptide spanning residues 52–212 is cleaved from the precursor; that stretch reads ASPLPREEEI…PSPRPRRAKR (161 aa). An N-linked (GlcNAc...) asparagine glycan is attached at Asn-68. A Cysteine switch motif is present at residues 192-199; the sequence is PMCNVKAP. Cys-194 contacts Zn(2+). The region spanning 218–428 is the Peptidase M12B domain; it reads RFVETLVVAD…GYGHCLLDKP (211 aa). 11 disulfide bridges follow: Cys-293–Cys-345, Cys-322–Cys-327, Cys-339–Cys-423, Cys-377–Cys-407, Cys-449–Cys-472, Cys-460–Cys-482, Cys-467–Cys-501, Cys-495–Cys-506, Cys-532–Cys-569, Cys-536–Cys-574, and Cys-547–Cys-559. Zn(2+) is bound at residue His-361. Glu-362 is an active-site residue. 2 residues coordinate Zn(2+): His-365 and His-371. In terms of domain architecture, Disintegrin spans 437 to 519; sequence TFPGKDYDAD…DQLQDFNIPQ (83 aa). A TSP type-1 domain is found at 520–575; it reads AGGWGPWGPWGDCSRTCGGGVQFSSRDCTRPVPRNGGKYCEGRRTRFRSCNTEDCP. The spacer stretch occupies residues 686-837; that stretch reads SKQSGSFRKF…LRRRPWAGRK (152 aa).

Interacts with SRPX2. It depends on Zn(2+) as a cofactor. In terms of processing, the precursor is cleaved by a furin endopeptidase. Glycosylated. Can be O-fucosylated by POFUT2 on a serine or a threonine residue found within the consensus sequence C1-X(2)-(S/T)-C2-G of the TSP type-1 repeat domains where C1 and C2 are the first and second cysteine residue of the repeat, respectively. Fucosylated repeats can then be further glycosylated by the addition of a beta-1,3-glucose residue by the glucosyltransferase, B3GALTL. Fucosylation mediates the efficient secretion of ADAMTS family members. Can also be C-glycosylated with one or two mannose molecules on tryptophan residues within the consensus sequence W-X-X-W of the TPRs, and N-glycosylated. These other glycosylations can also facilitate secretion. As to expression, expressed in brain, lung and heart. Expressed at very low level in placenta and skeletal muscles. Isoform 2: Detected in osteoarthritic synovium.

It localises to the secreted. The protein localises to the extracellular space. The protein resides in the extracellular matrix. It catalyses the reaction Glutamyl endopeptidase. Bonds cleaved include 370-Thr-Glu-Gly-Glu-|-Ala-Arg-Gly-Ser-377 in the interglobular domain of mammalian aggrecan.. Cleaves aggrecan, a cartilage proteoglycan, at the '392-Glu-|-Ala-393' site and may be involved in its turnover. Also cleaves COMP. May play an important role in the destruction of aggrecan in arthritic diseases. Could be a critical factor in the exacerbation of neurodegeneration in Alzheimer disease. The sequence is that of A disintegrin and metalloproteinase with thrombospondin motifs 4 (ADAMTS4) from Homo sapiens (Human).